The primary structure comprises 451 residues: DNA polymerase delta subunit 3 (451 aa).

3 disordered regions span residues Ser187–Ser241, Lys259–Arg386, and Ala404–Lys451. A compositionally biased stretch (polar residues) spans Pro200–Glu216. Over residues Ser225–Ser241 the composition is skewed to low complexity. The segment covering Gln306–Glu316 has biased composition (basic and acidic residues). Residues Glu329 to Ala353 show a composition bias toward acidic residues. Over residues Glu354–Pro366 the composition is skewed to basic and acidic residues. Over residues Gly376–Arg386 the composition is skewed to basic residues. Residues Gln441–Phe448 carry the PIP-box motif.

In terms of assembly, component of the DNA polymerase delta complex which consists of PolD1, PolD2, PolD3 and PolD4, with PolD1 bearing DNA polymerase and 3' to 5' proofreading exonuclease activities. Directly interacts with PCNA.

Its subcellular location is the nucleus. Accessory component of the DNA polymerase delta complex. The complex is required for the maintenance of genome integrity, acting in concert with the sliding clamp processivity factor PCNA. This chain is DNA polymerase delta subunit 3, found in Chaetomium thermophilum (strain DSM 1495 / CBS 144.50 / IMI 039719) (Thermochaetoides thermophila).